The chain runs to 444 residues: Xylose isomerase (444 aa).

Catalysis depends on residues His101 and Asp104. Positions 232, 268, 271, 296, 307, 309, and 339 each coordinate Mg(2+).

The protein belongs to the xylose isomerase family. As to quaternary structure, homotetramer. Mg(2+) serves as cofactor.

Its subcellular location is the cytoplasm. It catalyses the reaction alpha-D-xylose = alpha-D-xylulofuranose. This Thermotoga petrophila (strain ATCC BAA-488 / DSM 13995 / JCM 10881 / RKU-1) protein is Xylose isomerase.